We begin with the raw amino-acid sequence, 932 residues long: Protein translocase subunit SecA (932 aa).

ATP is bound by residues Gln-87, 105–109 (GEGKT), and Asp-515. The Zn(2+) site is built by Cys-916, Cys-918, Cys-927, and His-928.

It belongs to the SecA family. In terms of assembly, monomer and homodimer. Part of the essential Sec protein translocation apparatus which comprises SecA, SecYEG and auxiliary proteins SecDF-YajC and YidC. Zn(2+) is required as a cofactor.

The protein resides in the cell inner membrane. It localises to the cytoplasm. It carries out the reaction ATP + H2O + cellular proteinSide 1 = ADP + phosphate + cellular proteinSide 2.. Functionally, part of the Sec protein translocase complex. Interacts with the SecYEG preprotein conducting channel. Has a central role in coupling the hydrolysis of ATP to the transfer of proteins into and across the cell membrane, serving both as a receptor for the preprotein-SecB complex and as an ATP-driven molecular motor driving the stepwise translocation of polypeptide chains across the membrane. The polypeptide is Protein translocase subunit SecA (Burkholderia multivorans (strain ATCC 17616 / 249)).